We begin with the raw amino-acid sequence, 172 residues long: Peptide deformylase-like (172 aa).

The active site involves Glu-134.

Belongs to the polypeptide deformylase family.

The protein is Peptide deformylase-like of Rhizobium meliloti (strain 1021) (Ensifer meliloti).